Consider the following 86-residue polypeptide: Sec-independent protein translocase protein TatA (86 aa).

The chain crosses the membrane as a helical span at residues 3–23 (IFGVGLPEVTVILILALLIFG). The tract at residues 56 to 86 (MNEEDESPKSIESNQTNEINQEKIDSENSKK) is disordered. Residues 65-74 (SIESNQTNEI) are compositionally biased toward polar residues. Residues 75-86 (NQEKIDSENSKK) show a composition bias toward basic and acidic residues.

It belongs to the TatA/E family. As to quaternary structure, forms a complex with TatC.

The protein resides in the cell inner membrane. Functionally, part of the twin-arginine translocation (Tat) system that transports large folded proteins containing a characteristic twin-arginine motif in their signal peptide across membranes. TatA could form the protein-conducting channel of the Tat system. In Prochlorococcus marinus (strain MIT 9215), this protein is Sec-independent protein translocase protein TatA.